The chain runs to 415 residues: Tyrosine--tRNA ligase (415 aa).

Tyr-40 contributes to the L-tyrosine binding site. A 'HIGH' region motif is present at residues 45–54; that stretch reads ATAKSLHVGS. L-tyrosine is bound by residues Tyr-178 and Gln-182. Positions 238 to 242 match the 'KMSKS' region motif; the sequence is KMGKS. Lys-241 contacts ATP. The S4 RNA-binding domain maps to 350–414; that stretch reads ASIVQLIVKT…GKKRHALVQL (65 aa).

The protein belongs to the class-I aminoacyl-tRNA synthetase family. TyrS type 1 subfamily. Homodimer.

It localises to the cytoplasm. The catalysed reaction is tRNA(Tyr) + L-tyrosine + ATP = L-tyrosyl-tRNA(Tyr) + AMP + diphosphate + H(+). Functionally, catalyzes the attachment of tyrosine to tRNA(Tyr) in a two-step reaction: tyrosine is first activated by ATP to form Tyr-AMP and then transferred to the acceptor end of tRNA(Tyr). The sequence is that of Tyrosine--tRNA ligase from Ruegeria pomeroyi (strain ATCC 700808 / DSM 15171 / DSS-3) (Silicibacter pomeroyi).